Here is a 200-residue protein sequence, read N- to C-terminus: Holliday junction branch migration complex subunit RuvA (200 aa).

A domain I region spans residues 1-64 (MIGHLRGIIV…EDAHTLYGFH (64 aa)). A domain II region spans residues 65–143 (NDHERRLFRA…RWHTNDTPSP (79 aa)). The tract at residues 133–152 (SRWHTNDTPSPEGLRSSNTQ) is disordered. The flexible linker stretch occupies residues 144–148 (EGLRS). The interval 149 to 200 (SNTQPTQDAISALMALGYKPQEAKRAIDAIQKPDLSAETLIRLALKQMVLGT) is domain III.

Belongs to the RuvA family. In terms of assembly, homotetramer. Forms an RuvA(8)-RuvB(12)-Holliday junction (HJ) complex. HJ DNA is sandwiched between 2 RuvA tetramers; dsDNA enters through RuvA and exits via RuvB. An RuvB hexamer assembles on each DNA strand where it exits the tetramer. Each RuvB hexamer is contacted by two RuvA subunits (via domain III) on 2 adjacent RuvB subunits; this complex drives branch migration. In the full resolvosome a probable DNA-RuvA(4)-RuvB(12)-RuvC(2) complex forms which resolves the HJ.

The protein resides in the cytoplasm. Functionally, the RuvA-RuvB-RuvC complex processes Holliday junction (HJ) DNA during genetic recombination and DNA repair, while the RuvA-RuvB complex plays an important role in the rescue of blocked DNA replication forks via replication fork reversal (RFR). RuvA specifically binds to HJ cruciform DNA, conferring on it an open structure. The RuvB hexamer acts as an ATP-dependent pump, pulling dsDNA into and through the RuvAB complex. HJ branch migration allows RuvC to scan DNA until it finds its consensus sequence, where it cleaves and resolves the cruciform DNA. In Coxiella burnetii (strain CbuK_Q154) (Coxiella burnetii (strain Q154)), this protein is Holliday junction branch migration complex subunit RuvA.